The primary structure comprises 269 residues: Putative pyruvate, phosphate dikinase regulatory protein (269 aa).

147–154 contributes to the ADP binding site; the sequence is GVSRSSKT.

Belongs to the pyruvate, phosphate/water dikinase regulatory protein family. PDRP subfamily.

The enzyme catalyses N(tele)-phospho-L-histidyl/L-threonyl-[pyruvate, phosphate dikinase] + ADP = N(tele)-phospho-L-histidyl/O-phospho-L-threonyl-[pyruvate, phosphate dikinase] + AMP + H(+). It catalyses the reaction N(tele)-phospho-L-histidyl/O-phospho-L-threonyl-[pyruvate, phosphate dikinase] + phosphate + H(+) = N(tele)-phospho-L-histidyl/L-threonyl-[pyruvate, phosphate dikinase] + diphosphate. Its function is as follows. Bifunctional serine/threonine kinase and phosphorylase involved in the regulation of the pyruvate, phosphate dikinase (PPDK) by catalyzing its phosphorylation/dephosphorylation. The chain is Putative pyruvate, phosphate dikinase regulatory protein from Trichlorobacter lovleyi (strain ATCC BAA-1151 / DSM 17278 / SZ) (Geobacter lovleyi).